Consider the following 59-residue polypeptide: Embryonic testis differentiation protein homolog C (59 aa).

Positions 1-22 (MDKELPKASPSEPALNIKKSGK) are disordered.

The sequence is that of Embryonic testis differentiation protein homolog C from Homo sapiens (Human).